We begin with the raw amino-acid sequence, 943 residues long: Translation initiation factor IF-2 (943 aa).

Disordered stretches follow at residues 96 to 229 and 243 to 352; these read FIKR…ERRR and AAPK…QRQQ. Residues 104–116 show a composition bias toward low complexity; sequence DAPSDAAESAPSA. 2 stretches are compositionally biased toward basic and acidic residues: residues 120–163 and 171–229; these read ELVR…EERA and AEKK…ERRR. A compositionally biased stretch (low complexity) spans 278–293; that stretch reads ATGSGTGARAAAPSAP. Positions 313 to 323 are enriched in basic and acidic residues; it reads TTKKKEIKTRG. The region spanning 443–612 is the tr-type G domain; it reads SRAPVVTVMG…LLQAEVLELK (170 aa). Residues 452–459 are G1; it reads GHVDHGKT. 452-459 contacts GTP; that stretch reads GHVDHGKT. The tract at residues 477–481 is G2; the sequence is GITQH. A G3 region spans residues 498–501; that stretch reads DTPG. GTP-binding positions include 498–502 and 552–555; these read DTPGH and TKAD. The interval 552 to 555 is G4; it reads TKAD. Residues 588–590 are G5; it reads SSK.

It belongs to the TRAFAC class translation factor GTPase superfamily. Classic translation factor GTPase family. IF-2 subfamily.

The protein localises to the cytoplasm. Functionally, one of the essential components for the initiation of protein synthesis. Protects formylmethionyl-tRNA from spontaneous hydrolysis and promotes its binding to the 30S ribosomal subunits. Also involved in the hydrolysis of GTP during the formation of the 70S ribosomal complex. This Acidovorax sp. (strain JS42) protein is Translation initiation factor IF-2.